Consider the following 226-residue polypeptide: Uridylate kinase (226 aa).

9–13 (KVSGK) is an ATP binding site. Gly46 contacts UMP. Gly47 and Arg51 together coordinate ATP. Residues Asp68 and 116 to 122 (FQPGQST) contribute to the UMP site. The ATP site is built by Thr142, Tyr148, and Asp151.

This sequence belongs to the UMP kinase family. In terms of assembly, homohexamer.

The protein resides in the cytoplasm. It catalyses the reaction UMP + ATP = UDP + ADP. It functions in the pathway pyrimidine metabolism; CTP biosynthesis via de novo pathway; UDP from UMP (UMPK route): step 1/1. Inhibited by UTP. Catalyzes the reversible phosphorylation of UMP to UDP. The protein is Uridylate kinase of Hyperthermus butylicus (strain DSM 5456 / JCM 9403 / PLM1-5).